We begin with the raw amino-acid sequence, 420 residues long: MYTHVDVVGIAEASAALYVQKDRDRYLDVLTTIENFIYQHKCILTGESAHLLFLKKSIYLYEFYSDNVAEHSKALATLLYNLDPEYLTRYTVLITKIPNHWYVINVDQREFVRLYAIPAVKQHLPIPILPFHCTSALTQQDLFCLGPELQLIQIYSKLCNPNFVEEWPTLLDYEKNMRTLFLEQFPEKLEKTGGKKEKEEKHESIIKKIILEMVSTHQRIVVGGYIQKNLYNHVIKNRNRLQLITSLNIYEEKDIIQQFCDSNGLKIKICVNNPLLPTNPELRRLTIYFNNNDDQSYLIVDMYNTGSYELVPTNQINTLDNSFLIGTPFVQARFLLVEIWVLMLIAQQTKKDTKKIIQFFINQYETLMNSPWPSIEALFPSSSKRYLGNYVDPNALIKWAQLKLKRIPPFYPGRPDEESC.

This sequence belongs to the asfivirus K421R family.

Its subcellular location is the virion. This is an uncharacterized protein from Ornithodoros (relapsing fever ticks).